The primary structure comprises 333 residues: 5-formaminoimidazole-4-carboxamide-1-(beta)-D-ribofuranosyl 5'-monophosphate synthetase (333 aa).

Residues His-21 and Ser-84 each coordinate 5-amino-1-(5-phospho-beta-D-ribosyl)imidazole-4-carboxamide. An ATP-grasp domain is found at 118 to 313 (MELLAAAGIP…YFDEPMDMGE (196 aa)). Residues 141–187 (PVIV…VPAY) and Glu-209 contribute to the ATP site. Asn-229 contributes to the 5-amino-1-(5-phospho-beta-D-ribosyl)imidazole-4-carboxamide binding site. The Mg(2+) site is built by Glu-268 and Glu-281.

It belongs to the phosphohexose mutase family. Mg(2+) serves as cofactor. Requires Mn(2+) as cofactor.

The catalysed reaction is 5-amino-1-(5-phospho-beta-D-ribosyl)imidazole-4-carboxamide + formate + ATP = 5-formamido-1-(5-phospho-D-ribosyl)imidazole-4-carboxamide + ADP + phosphate. The protein operates within purine metabolism; IMP biosynthesis via de novo pathway; 5-formamido-1-(5-phospho-D-ribosyl)imidazole-4-carboxamide from 5-amino-1-(5-phospho-D-ribosyl)imidazole-4-carboxamide (formate route): step 1/1. In terms of biological role, catalyzes the ATP- and formate-dependent formylation of 5-aminoimidazole-4-carboxamide-1-beta-d-ribofuranosyl 5'-monophosphate (AICAR) to 5-formaminoimidazole-4-carboxamide-1-beta-d-ribofuranosyl 5'-monophosphate (FAICAR) in the absence of folates. This Pyrobaculum calidifontis (strain DSM 21063 / JCM 11548 / VA1) protein is 5-formaminoimidazole-4-carboxamide-1-(beta)-D-ribofuranosyl 5'-monophosphate synthetase.